Reading from the N-terminus, the 191-residue chain is Scytalone dehydratase PfmaJ (191 aa).

Residues Tyr-25, Tyr-45, and Phe-48 each coordinate substrate. Residues His-80 and His-105 contribute to the active site. Substrate is bound at residue Asn-126.

Belongs to the scytalone dehydratase family. Homotrimer. Each subunit contains an active site, located in the central part of the hydrophobic core of the monomer, which functions independently.

Its subcellular location is the endosome. It carries out the reaction scytalone = 1,3,8-trihydroxynaphthalene + H2O. It functions in the pathway pigment biosynthesis; melanin biosynthesis. Scytalone dehydratase involved the biosynthesis of dihydroxynaphthalene (DHN)-melanin, a bluish-green pigment forming a dark layer in the conidial wall that protects the conidia from UV radiations. The first step of the pathway is the production of the pentaketide 1,3,6,8-tetrahydroxynaphthalene (1,3,6,8-THN or T4HN) by the polyketide synthase PfmaE though condensation of acetyl-CoA with malonyl-CoA. T4HN is not stable and easily oxidizes into the stable form flaviolin. T4HN is also substrate of the hydroxynaphthalene reductase PfmaG to yield scytalone. The scytalone dehydratase PfmaJ then reduces scytalone to 1,3,8-THN. 1,3,8-THN is then substrate of the hydroxynaphthalene reductase PfmaI to yield vermelone. Vermelone is further converted by the multicopper oxidase PfmaD to 1,8-DHN. Finally the laccase PFICI_06862 transforms 1,8-DHN to DHN-melanin. The roles of the 5-oxoprolinase PfmaA and the proline iminopeptidase PfmaB within the cluster have not been elucidated yet. This Pestalotiopsis fici (strain W106-1 / CGMCC3.15140) protein is Scytalone dehydratase PfmaJ.